The sequence spans 173 residues: NADH-ubiquinone oxidoreductase chain 6 (173 aa).

The next 5 membrane-spanning stretches (helical) occupy residues 1–21, 27–47, 48–68, 87–107, and 139–159; these read MTYFVLFLGLCFVLGGLAVAS, YGVVGLVVASVAGCGWLLSLG, VSFVSLVLFMVYLGGMLVVFV, VVGYGAGFVLVLVVGGVVGGL, and CGVGMFLVAGWGLLLTLFVVL.

This sequence belongs to the complex I subunit 6 family.

It localises to the mitochondrion membrane. It carries out the reaction a ubiquinone + NADH + 5 H(+)(in) = a ubiquinol + NAD(+) + 4 H(+)(out). Core subunit of the mitochondrial membrane respiratory chain NADH dehydrogenase (Complex I) that is believed to belong to the minimal assembly required for catalysis. Complex I functions in the transfer of electrons from NADH to the respiratory chain. The immediate electron acceptor for the enzyme is believed to be ubiquinone. This Larus canus (Common gull) protein is NADH-ubiquinone oxidoreductase chain 6 (MT-ND6).